We begin with the raw amino-acid sequence, 141 residues long: Hemoglobin subunit alpha-D (141 aa).

The Globin domain maps to Met-1 to Arg-141. Heme b is bound by residues His-58 and His-87.

In terms of assembly, heterotetramer of two alpha-D chains and two beta chains. Red blood cells.

Functionally, involved in oxygen transport from the lung to the various peripheral tissues. This chain is Hemoglobin subunit alpha-D (HBAD), found in Aythya fuligula (Tufted duck).